The sequence spans 242 residues: 7-cyano-7-deazaguanine synthase (242 aa).

Positions Met1 to Asn25 are disordered. Leu32 to Leu42 serves as a coordination point for ATP. Zn(2+)-binding residues include Cys212, Cys221, Cys224, and Cys227.

It belongs to the QueC family. Zn(2+) is required as a cofactor.

The enzyme catalyses 7-carboxy-7-deazaguanine + NH4(+) + ATP = 7-cyano-7-deazaguanine + ADP + phosphate + H2O + H(+). Its pathway is purine metabolism; 7-cyano-7-deazaguanine biosynthesis. Functionally, catalyzes the ATP-dependent conversion of 7-carboxy-7-deazaguanine (CDG) to 7-cyano-7-deazaguanine (preQ(0)). The polypeptide is 7-cyano-7-deazaguanine synthase (Leptospira borgpetersenii serovar Hardjo-bovis (strain JB197)).